The primary structure comprises 636 residues: Fructose-1,6-bisphosphatase class 3 (636 aa).

The protein belongs to the FBPase class 3 family. The cofactor is Mn(2+).

The enzyme catalyses beta-D-fructose 1,6-bisphosphate + H2O = beta-D-fructose 6-phosphate + phosphate. Its pathway is carbohydrate biosynthesis; gluconeogenesis. The polypeptide is Fructose-1,6-bisphosphatase class 3 (Streptococcus sanguinis (strain SK36)).